The sequence spans 408 residues: 4-O-methyl-glucuronoyl methylesterase 1 (408 aa).

A signal peptide spans 1-19; it reads MASSSRFAALLLLALPALA. Intrachain disulfides connect Cys-31-Cys-65, Cys-218-Cys-354, and Cys-250-Cys-326. The GXSYXG catalytic site motif motif lies at 217–222; that stretch reads GCSRDG. Ser-219 serves as the catalytic Nucleophile. Residues Lys-223, Gln-265, and Glu-273 each coordinate substrate. Asn-287 carries N-linked (GlcNAc...) asparagine glycosylation. Trp-317 serves as a coordination point for substrate. N-linked (GlcNAc...) asparagine glycosylation occurs at Asn-350. His-353 acts as the Proton donor/acceptor in catalysis. Residues Asn-390, Asn-395, and Asn-401 are each glycosylated (N-linked (GlcNAc...) asparagine).

Belongs to the carbohydrate esterase 15 (CE15) family.

It is found in the secreted. It carries out the reaction a 4-O-methyl-alpha-D-glucuronosyl ester derivative + H2O = 4-O-methyl-alpha-D-glucuronate derivative + an alcohol + H(+). Functionally, glucuronoyl esterase which may play a significant role in biomass degradation, as it is considered to disconnect hemicellulose from lignin through the hydrolysis of the ester bond between 4-O-methyl-D-glucuronic acid residues of glucuronoxylans and aromatic alcohols of lignin. Can hydrolyze benzyl glucuronic acid (BnGlcA), allyl glucuronic acid (allylGlcA) and to a lower degree methyl glucuronic acid (MeGlcA) in vitro. The sequence is that of 4-O-methyl-glucuronoyl methylesterase 1 from Wolfiporia cocos (strain MD-104) (Brown rot fungus).